The primary structure comprises 509 residues: Probable aspartic-type endopeptidase CTSD (509 aa).

The first 21 residues, 1–21 (MQFLWLCLLSAVTLQFTGTLA), serve as a signal peptide directing secretion. The 307-residue stretch at 102–408 (YFSEVKVGSE…DFDKNRVGLA (307 aa)) folds into the Peptidase A1 domain. Asp120 is a catalytic residue. An N-linked (GlcNAc...) asparagine glycan is attached at Asn174. Asp302 is a catalytic residue. Asn361 is a glycosylation site (N-linked (GlcNAc...) asparagine). Residues 451-489 (NKAPSGGSPGLPAESGSDSTTNGEATNGATSSPNSSSSV) are disordered. Positions 466–480 (GSDSTTNGEATNGAT) are enriched in polar residues. N-linked (GlcNAc...) asparagine glycosylation is present at Asn484. Ser485 carries GPI-anchor amidated serine lipidation. A propeptide spans 486–509 (SSSVLTPTWLTLAVFFAIGSSLWS) (removed in mature form).

The protein belongs to the peptidase A1 family.

The protein localises to the cell membrane. In terms of biological role, probable GPI-anchored aspartic-type endopeptidase which contributes to virulence. The chain is Probable aspartic-type endopeptidase CTSD (CTSD) from Arthroderma benhamiae (strain ATCC MYA-4681 / CBS 112371) (Trichophyton mentagrophytes).